The primary structure comprises 195 residues: NADH-quinone oxidoreductase subunit B (195 aa).

The [4Fe-4S] cluster site is built by cysteine 74, cysteine 75, cysteine 139, and cysteine 169.

This sequence belongs to the complex I 20 kDa subunit family. In terms of assembly, NDH-1 is composed of 14 different subunits. Subunits NuoB, C, D, E, F, and G constitute the peripheral sector of the complex. The cofactor is [4Fe-4S] cluster.

The protein resides in the cell inner membrane. The enzyme catalyses a quinone + NADH + 5 H(+)(in) = a quinol + NAD(+) + 4 H(+)(out). Its function is as follows. NDH-1 shuttles electrons from NADH, via FMN and iron-sulfur (Fe-S) centers, to quinones in the respiratory chain. The immediate electron acceptor for the enzyme in this species is believed to be ubiquinone. Couples the redox reaction to proton translocation (for every two electrons transferred, four hydrogen ions are translocated across the cytoplasmic membrane), and thus conserves the redox energy in a proton gradient. The sequence is that of NADH-quinone oxidoreductase subunit B from Methylobacterium sp. (strain 4-46).